An 80-amino-acid polypeptide reads, in one-letter code: MGCVKSKKSAAEAAVGGAPGEKARLVGPEEARAPGAPQAGPVLLDYAQRLSEEIVVRAVQQWAELDRRYGDIPYIECDAP.

A lipid anchor (N-myristoyl glycine) is attached at Gly2.

Belongs to the small membrane AKAP family. May be palmitoylated at Cys-3.

Its subcellular location is the cell membrane. Binds to type I regulatory subunits of protein kinase A and may anchor/target them to the plasma membrane. The chain is Small membrane A-kinase anchor protein from Tetraodon nigroviridis (Spotted green pufferfish).